The following is a 394-amino-acid chain: Probable cytosolic iron-sulfur protein assembly protein 1 (394 aa).

WD repeat units lie at residues 10–49, 56–108, 144–184, 191–230, 237–284, 313–352, and 359–394; these read AHNDKAWCAKSHPTLPLLATASTDRTSHIYNLSAKKNFPL, AHKR…EQDS, GHEN…EEFE, DHQHDVKHITWHPSQNLLASSSYDDTIKLYKQDEDDDDWS, GHGG…TEQI, IHKYAVYSVSWSAKTGKISSTGSDGKLVIYRETESKKWEI, and AHGVYEINSVSWCTLDDKTEVLVTAGDDGAINIWEP.

Belongs to the WD repeat CIA1 family. In terms of assembly, interacts with NAR1.

Its subcellular location is the cytoplasm. It localises to the nucleus. Essential component of the cytosolic iron-sulfur (Fe/S) protein assembly machinery. Required for the maturation of extramitochondrial Fe/S proteins. The sequence is that of Probable cytosolic iron-sulfur protein assembly protein 1 from Debaryomyces hansenii (strain ATCC 36239 / CBS 767 / BCRC 21394 / JCM 1990 / NBRC 0083 / IGC 2968) (Yeast).